We begin with the raw amino-acid sequence, 775 residues long: MKVPYSWLSEFVELSDVSPEEIAEKLSLRSVEATVETFGIDLDGVVFGKVVEVKEHPTKKKLAVVKVQVQEHIFIDVVTVDKSVREGDGVIVALPNAKVGNMCVTEREFDGVVSKGLLLSAQELGLEEKSEGVLKIHEDFKPGTDANEILGFGEKIIEIDITPNRGDMLSVRGVARDLSAIFRLPKKKPEEPTYEETGEFFIEIEDEDCKRYRGVVIEGVEIKESPLYIKKRLWQCGIKSINNVVDITNYVMLRDGQPLHAFDLSKVEGGIIVRSAKKGEKIITLDGEERELDEDILVIADREKPLAVAGVIGGLESGIKENTKDILLESAYFNPFRVRKASKKLGIQTESSYRFERNVDIERVDRAQDYAVYLILKHAGGKVKVVKDVYREKYKPKKVFLPQGKYIRYAGESYKNEEVKEILDALEIPNEIMRCGVEVLVPSHRSFDIQRDVDLIEEIMRVKGYEHYTSETLKLPSIANLWKDNLLEVKKYLRDKGLTEVINFSFEDSKLYELLNLPLPELEVINPLNPTQRYMRNTLITSLLRTAVYNDRNYNYDQAVFELGKVFFKEGEENRLGILLKGNKPRTLKEEKWEPYDLTEIIAGIFALFGLEPEFRNAKRNFLHPYVQGEVYLEGEFVGFFGKLHPKIAKELELKGEPFVAEIEIERVLSKKRLPHYREVAKFPPVVRDIALVMDKELDVNKLLIDTKSQIGELLEEVRVFDVYTGEKVGEGKKSVAVRLVLRSKTGSLKDEEANELVNKLVNYLKEKYGVELRT.

The 109-residue stretch at 39–147 (GIDLDGVVFG…EDFKPGTDAN (109 aa)) folds into the tRNA-binding domain. The region spanning 394–470 (YKPKKVFLPQ…RVKGYEHYTS (77 aa)) is the B5 domain. D448, D454, E457, and E458 together coordinate Mg(2+). Residues 681-774 (AKFPPVVRDI…LKEKYGVELR (94 aa)) form the FDX-ACB domain.

Belongs to the phenylalanyl-tRNA synthetase beta subunit family. Type 1 subfamily. As to quaternary structure, tetramer of two alpha and two beta subunits. Mg(2+) is required as a cofactor.

The protein localises to the cytoplasm. It carries out the reaction tRNA(Phe) + L-phenylalanine + ATP = L-phenylalanyl-tRNA(Phe) + AMP + diphosphate + H(+). This Aquifex aeolicus (strain VF5) protein is Phenylalanine--tRNA ligase beta subunit (pheT).